We begin with the raw amino-acid sequence, 252 residues long: MEGPASPAPAPGALPYYVAFSQLLGLTVVAMTGAWLGMYRGGIAWESALQFNVHPLCMVIGLVFLQGDALLVYRVFRNEAKRTTKVLHGLLHVFAFVIALVGLVAVFEHHRKKGYADLYSLHSWCGILVFALFFAQWLVGFSFFLFPGASFSLRSRYRPQHVFFGAAIFLLSVATALLGLKEALLFELGTKYSTFEPEGVLANVLGLLLAAFATVVLYILTRADWKRPLQAEEQALSMDFKTLTEGDSPSSQ.

The residue at position 1 (methionine 1) is an N-acetylmethionine. Topologically, residues 1–17 (MEGPASPAPAPGALPYY) are cytoplasmic. Residues 18–38 (VAFSQLLGLTVVAMTGAWLGM) traverse the membrane as a helical segment. The region spanning 20 to 221 (FSQLLGLTVV…FATVVLYILT (202 aa)) is the Cytochrome b561 domain. At 39-52 (YRGGIAWESALQFN) the chain is on the vesicular side. Residues 53–73 (VHPLCMVIGLVFLQGDALLVY) traverse the membrane as a helical segment. Heme b contacts are provided by histidine 54, arginine 74, and lysine 81. Residues 74–86 (RVFRNEAKRTTKV) lie on the Cytoplasmic side of the membrane. Lysine 81 and lysine 85 together coordinate L-ascorbate. Residues 87 to 107 (LHGLLHVFAFVIALVGLVAVF) form a helical membrane-spanning segment. Heme b-binding positions include histidine 88, 117-120 (DLYS), and histidine 122. Over 108 to 125 (EHHRKKGYADLYSLHSWC) the chain is Vesicular. A helical transmembrane segment spans residues 126 to 146 (GILVFALFFAQWLVGFSFFLF). Topologically, residues 147-159 (PGASFSLRSRYRP) are cytoplasmic. Arginine 154 lines the L-ascorbate pocket. The helical transmembrane segment at 160–180 (QHVFFGAAIFLLSVATALLGL) threads the bilayer. Residues histidine 161 and glutamate 182 each coordinate heme b. The Vesicular portion of the chain corresponds to 181 to 199 (KEALLFELGTKYSTFEPEG). A helical membrane pass occupies residues 200–220 (VLANVLGLLLAAFATVVLYIL). Over 221-252 (TRADWKRPLQAEEQALSMDFKTLTEGDSPSSQ) the chain is Cytoplasmic. Lysine 226 contributes to the heme b binding site. Phosphoserine occurs at positions 248 and 250.

Heme b serves as cofactor.

The protein resides in the cytoplasmic vesicle. It localises to the secretory vesicle. The protein localises to the chromaffin granule membrane. It catalyses the reaction monodehydro-L-ascorbate radical(out) + L-ascorbate(in) = monodehydro-L-ascorbate radical(in) + L-ascorbate(out). In terms of biological role, transmembrane reductase that uses ascorbate as an electron donor in the cytoplasm and transfers electrons across membranes to reduce monodehydro-L-ascorbate radical in the lumen of secretory vesicles. It is therefore involved the regeneration and homeostasis within secretory vesicles of ascorbate which in turn provides reducing equivalents needed to support the activity of intravesicular enzymes. In Ovis aries (Sheep), this protein is Transmembrane ascorbate-dependent reductase CYB561 (CYB561).